The following is a 618-amino-acid chain: Phosphoenolpyruvate carboxykinase [GTP] (618 aa).

Residues arginine 83 and 217–219 (YGG) contribute to the substrate site. Residues lysine 226 and histidine 245 each coordinate Mn(2+). Residue serine 267 coordinates substrate. Residue 268 to 273 (MCGKTS) coordinates GTP. The active site involves cysteine 269. Residue aspartate 286 participates in Mn(2+) binding. Substrate is bound at residue 381 to 383 (NAR). GTP-binding residues include arginine 383 and arginine 415.

The protein belongs to the phosphoenolpyruvate carboxykinase [GTP] family. Mn(2+) is required as a cofactor.

The protein localises to the cytoplasm. It catalyses the reaction oxaloacetate + GTP = phosphoenolpyruvate + GDP + CO2. The protein operates within carbohydrate biosynthesis; gluconeogenesis. Its function is as follows. Catalyzes the conversion of oxaloacetate (OAA) to phosphoenolpyruvate (PEP), the rate-limiting step in the metabolic pathway that produces glucose from lactate and other precursors derived from the citric acid cycle. The protein is Phosphoenolpyruvate carboxykinase [GTP] of Pyrococcus abyssi (strain GE5 / Orsay).